Here is a 444-residue protein sequence, read N- to C-terminus: MKKLLSRTSETHPLTWRLNAQQDTVWIKEYKRKNGYRAFEKVVNHMTSEDVIDLIKQSGLKGRGGAGFLTGLKWSLMPPLNDEYGYTRYLLCNADEMEPGTYKDRFLMEKVPHQLLEGILISAFALSVTKSYIFLRGEYVNTERILKQSIIEATNYGYLGKNVCGSNLTFEIFIHTGAGRYICGEETALINSLEGRRANPRFKPPFPAYVGLWGKPTCVNNVETLSNVPAIFLNGVKWYKGLSKSLDTGTKMMGFSGSVKFPGIWELPFGITAREIFERYAGGMKNNKKLKVWQPGGASTSFLIDKHLDVPMDFVNIKKVGSRLGTALAMAVDDSVSIVSLVRNIEEFFSRESCGFCTPCRDGLPWIVKILKVLEQKIGVPEDIEILEQLCEQLGPGRTFCAHAPGAIEPLKSALKYFRLEFELCVNSNSTIKCKYIHSSISEY.

Position 62–71 (62–71 (GRGGAGFLTG)) interacts with NAD(+). An FMN-binding site is contributed by 177 to 224 (GAGRYICGEETALINSLEGRRANPRFKPPFPAYVGLWGKPTCVNNVET). Residues cysteine 354, cysteine 357, cysteine 360, and cysteine 401 each contribute to the [4Fe-4S] cluster site.

It belongs to the complex I 51 kDa subunit family. As to quaternary structure, composed of 13 different subunits. Subunits NuoCD, E, F, and G constitute the peripheral sector of the complex. [4Fe-4S] cluster serves as cofactor. FMN is required as a cofactor.

It carries out the reaction a quinone + NADH + 5 H(+)(in) = a quinol + NAD(+) + 4 H(+)(out). NDH-1 shuttles electrons from NADH, via FMN and iron-sulfur (Fe-S) centers, to quinones in the respiratory chain. Couples the redox reaction to proton translocation (for every two electrons transferred, four hydrogen ions are translocated across the cytoplasmic membrane), and thus conserves the redox energy in a proton gradient. This Buchnera aphidicola subsp. Baizongia pistaciae (strain Bp) protein is NADH-quinone oxidoreductase subunit F (nuoF).